A 379-amino-acid polypeptide reads, in one-letter code: Chaperone protein DnaJ (379 aa).

One can recognise a J domain in the interval Asp-5–Gly-70. The CR-type zinc finger occupies Gly-135 to Thr-213. Zn(2+)-binding residues include Cys-148, Cys-151, Cys-165, Cys-168, Cys-187, Cys-190, Cys-201, and Cys-204. CXXCXGXG motif repeat units lie at residues Cys-148–Gly-155, Cys-165–Gly-172, Cys-187–Gly-194, and Cys-201–Gly-208.

It belongs to the DnaJ family. As to quaternary structure, homodimer. Requires Zn(2+) as cofactor.

It is found in the cytoplasm. Its function is as follows. Participates actively in the response to hyperosmotic and heat shock by preventing the aggregation of stress-denatured proteins and by disaggregating proteins, also in an autonomous, DnaK-independent fashion. Unfolded proteins bind initially to DnaJ; upon interaction with the DnaJ-bound protein, DnaK hydrolyzes its bound ATP, resulting in the formation of a stable complex. GrpE releases ADP from DnaK; ATP binding to DnaK triggers the release of the substrate protein, thus completing the reaction cycle. Several rounds of ATP-dependent interactions between DnaJ, DnaK and GrpE are required for fully efficient folding. Also involved, together with DnaK and GrpE, in the DNA replication of plasmids through activation of initiation proteins. In Colwellia maris, this protein is Chaperone protein DnaJ.